Reading from the N-terminus, the 531-residue chain is ATP synthase subunit beta (531 aa).

The tract at residues Met1–Lys48 is disordered. A compositionally biased stretch (basic residues) spans Ser19–Val29. Positions Ser30–His44 are enriched in polar residues. Residue Gly203–Thr210 coordinates ATP.

It belongs to the ATPase alpha/beta chains family. As to quaternary structure, F-type ATPases have 2 components, CF(1) - the catalytic core - and CF(0) - the membrane proton channel. CF(1) has five subunits: alpha(3), beta(3), gamma(1), delta(1), epsilon(1). CF(0) has three main subunits: a(1), b(2) and c(9-12). The alpha and beta chains form an alternating ring which encloses part of the gamma chain. CF(1) is attached to CF(0) by a central stalk formed by the gamma and epsilon chains, while a peripheral stalk is formed by the delta and b chains.

The protein localises to the cell inner membrane. It carries out the reaction ATP + H2O + 4 H(+)(in) = ADP + phosphate + 5 H(+)(out). Functionally, produces ATP from ADP in the presence of a proton gradient across the membrane. The catalytic sites are hosted primarily by the beta subunits. This chain is ATP synthase subunit beta, found in Bartonella henselae (strain ATCC 49882 / DSM 28221 / CCUG 30454 / Houston 1) (Rochalimaea henselae).